A 562-amino-acid polypeptide reads, in one-letter code: Ribonuclease Y (562 aa).

A helical transmembrane segment spans residues 1 to 21 (MNMLYFVLALLVGLAGGFFVG). Positions 108-129 (AAQDAARERETLSADRQETRRE) are disordered. The region spanning 252–312 (SVSVVPIPND…VRREVARHVL (61 aa)) is the KH domain. The HD domain maps to 378–471 (VLKHSVQVAH…VAAADAISAA (94 aa)).

This sequence belongs to the RNase Y family.

Its subcellular location is the cell membrane. Functionally, endoribonuclease that initiates mRNA decay. This is Ribonuclease Y from Deinococcus geothermalis (strain DSM 11300 / CIP 105573 / AG-3a).